Reading from the N-terminus, the 563-residue chain is Adenine deaminase (563 aa).

This sequence belongs to the metallo-dependent hydrolases superfamily. Adenine deaminase family. Mn(2+) is required as a cofactor.

It catalyses the reaction adenine + H2O + H(+) = hypoxanthine + NH4(+). The protein is Adenine deaminase of Brucella anthropi (strain ATCC 49188 / DSM 6882 / CCUG 24695 / JCM 21032 / LMG 3331 / NBRC 15819 / NCTC 12168 / Alc 37) (Ochrobactrum anthropi).